Consider the following 486-residue polypeptide: Probable peptidoglycan glycosyltransferase FtsW (486 aa).

Over 1–50 the chain is Cytoplasmic; that stretch reads MAGAARDRAFLDHFGGAGADRPCHVEGALMNDMSRQATRLDAIGGRYDPW. The chain crosses the membrane as a helical span at residues 51-71; it reads LLGAAVTLASLGVVMVASSSI. The Periplasmic segment spans residues 72–77; the sequence is ELEASP. Residues 78–98 traverse the membrane as a helical segment; the sequence is FYYLTRHLLFLGGGIALAFWA. Residues 99–112 lie on the Cytoplasmic side of the membrane; sequence MRTELKTIEQHNQM. Residues 113-133 form a helical membrane-spanning segment; it reads LLLACFVLLVVVFVPGLGSTV. The Periplasmic segment spans residues 134-141; it reads NGAKRWIN. Residues 142–162 form a helical membrane-spanning segment; sequence LGVSRFQVVESVKVFYIIWLA. The Cytoplasmic segment spans residues 163-174; that stretch reads SYLVRFRDEVNA. A helical membrane pass occupies residues 175 to 195; sequence TWQAMLKPVFVVGLLVGLLLL. Residues 196 to 199 are Periplasmic-facing; that stretch reads QPDF. A helical transmembrane segment spans residues 200–220; sequence GSSMLLLSVTACMLVLGGAPI. At 221-222 the chain is on the cytoplasmic side; it reads GR. The helical transmembrane segment at 223–243 threads the bilayer; that stretch reads IILPILLLLPALVALVIFEPY. The Periplasmic portion of the chain corresponds to 244–298; that stretch reads RMRRVTSFMDPWVDQLGSGYQLSNALMAIGRGQWTGVGLGASVQKLNYLPESHTD. The helical transmembrane segment at 299 to 319 threads the bilayer; sequence FIFSVIAEELGFVGVCGVIGL. The Cytoplasmic portion of the chain corresponds to 320–342; sequence YALLVGRAFWLGMRCVEMKRHFS. A helical membrane pass occupies residues 343–363; the sequence is GYIAFGIGLWIAMQSFVSIGV. The Periplasmic portion of the chain corresponds to 364–374; sequence NLGILPTKGLT. Residues 375 to 395 traverse the membrane as a helical segment; the sequence is LPLISSGGSSVLMTCLAMGVL. At 396–486 the chain is on the cytoplasmic side; the sequence is LRVSYEADRA…RVEPTFGRIA (91 aa).

Belongs to the SEDS family. FtsW subfamily.

The protein localises to the cell inner membrane. The catalysed reaction is [GlcNAc-(1-&gt;4)-Mur2Ac(oyl-L-Ala-gamma-D-Glu-L-Lys-D-Ala-D-Ala)](n)-di-trans,octa-cis-undecaprenyl diphosphate + beta-D-GlcNAc-(1-&gt;4)-Mur2Ac(oyl-L-Ala-gamma-D-Glu-L-Lys-D-Ala-D-Ala)-di-trans,octa-cis-undecaprenyl diphosphate = [GlcNAc-(1-&gt;4)-Mur2Ac(oyl-L-Ala-gamma-D-Glu-L-Lys-D-Ala-D-Ala)](n+1)-di-trans,octa-cis-undecaprenyl diphosphate + di-trans,octa-cis-undecaprenyl diphosphate + H(+). The protein operates within cell wall biogenesis; peptidoglycan biosynthesis. Peptidoglycan polymerase that is essential for cell division. In Xanthomonas oryzae pv. oryzae (strain KACC10331 / KXO85), this protein is Probable peptidoglycan glycosyltransferase FtsW.